Here is an 842-residue protein sequence, read N- to C-terminus: Xyloglucanase Xgh74A (842 aa).

The N-terminal stretch at 1–32 is a signal peptide; it reads MVKKFTSKIKAAVFAAVVAATAIFGPAISSQA. Asp70 serves as the catalytic Nucleophile. 4 BNR repeats span residues 134–144, 185–196, 252–262, and 358–368; these read RSTDRGETWEK, WRSTDYGVTWSK, YRSTDGGVTWK, and FRSTDGGATWK. Asp480 functions as the Proton donor in the catalytic mechanism. BNR repeat units follow at residues 533 to 541, 577 to 586, 616 to 626, 660 to 671, and 708 to 718; these read FSYDGGRNW, VTTDNGNSWK, YISTDGGLTFT, WRSTDGGYTFEK, and FRSDDAGKTWV. Positions 771–841 constitute a Dockerin domain; sequence DKGLVGDLNG…LLQAIPELPK (71 aa).

The protein belongs to the glycosyl hydrolase 74 family.

Functionally, hydrolyzes the glucosidic bonds of unbranched Glc residues in tamarind seed xyloglucan, producing XXXG, XLXG, XXLG and XLLG. Has low activity on carboxymethylcellulose, lichenan,hydroxyethylcellulose and glucuronoxylan, and no activity on xylan, polygalaturonic acid, wheat arabinoxylan, rhamnogalacturan, curdlan, laminarin, galactomannan, galactan, arabinan and pachyman or amorphous cellulose. The sequence is that of Xyloglucanase Xgh74A from Acetivibrio thermocellus (strain ATCC 27405 / DSM 1237 / JCM 9322 / NBRC 103400 / NCIMB 10682 / NRRL B-4536 / VPI 7372) (Clostridium thermocellum).